Here is a 359-residue protein sequence, read N- to C-terminus: Histamine H2 receptor (359 aa).

The Extracellular segment spans residues 1–22 (MAPNGTASSFCLDSTACKITIT). N-linked (GlcNAc...) asparagine glycosylation occurs at N4. A helical membrane pass occupies residues 23 to 44 (VVLAVLILITVAGNVVVCLAVG). Over 45–57 (LNRRLRNLTNCFI) the chain is Cytoplasmic. A helical transmembrane segment spans residues 58 to 81 (VSLAITDLLLGLLVLPFSAIYQLS). Residues 82 to 92 (CKWSFGKVFCN) lie on the Extracellular side of the membrane. An intrachain disulfide couples C91 to C174. Residues 93 to 114 (IYTSLDVMLCTASILNLFMISL) traverse the membrane as a helical segment. The Cytoplasmic segment spans residues 115–134 (DRYCAVMDPLRYPVLVTPVR). The chain crosses the membrane as a helical span at residues 135–159 (VAISLVLIWVISITLSFLSIHLGWN). Over 160-180 (SRNETSKGNHTTSKCKVQVNE) the chain is Extracellular. The chain crosses the membrane as a helical span at residues 181 to 204 (VYGLVDGLVTFYLPLLIMCITYYR). Over 205–234 (IFKVARDQAKRINHISSWKAATIREHKATV) the chain is Cytoplasmic. Residues 235-258 (TLAAVMGAFIICWFPYFTAFVYRG) form a helical membrane-spanning segment. Topologically, residues 259–267 (LRGDDAINE) are extracellular. Residues 268 to 289 (VLEAIVLWLGYANSALNPILYA) form a helical membrane-spanning segment. The Cytoplasmic portion of the chain corresponds to 290–359 (ALNRDFRTGY…VTAPQGATDR (70 aa)). C305 carries the S-palmitoyl cysteine lipid modification. The segment at 316–340 (SLRSNASQLSRTQSREPRQQEEKPL) is disordered. A compositionally biased stretch (polar residues) spans 317 to 327 (LRSNASQLSRT). The span at 328-340 (QSREPRQQEEKPL) shows a compositional bias: basic and acidic residues.

It belongs to the G-protein coupled receptor 1 family.

The protein localises to the cell membrane. The H2 subclass of histamine receptors mediates gastric acid secretion. Also appears to regulate gastrointestinal motility and intestinal secretion. Possible role in regulating cell growth and differentiation. The activity of this receptor is mediated by G proteins which activate adenylyl cyclase and, through a separate G protein-dependent mechanism, the phosphoinositide/protein kinase (PKC) signaling pathway. The protein is Histamine H2 receptor (HRH2) of Gorilla gorilla gorilla (Western lowland gorilla).